Here is a 158-residue protein sequence, read N- to C-terminus: Ribosome maturation factor RimP (158 aa).

It belongs to the RimP family.

The protein resides in the cytoplasm. Its function is as follows. Required for maturation of 30S ribosomal subunits. In Lactobacillus delbrueckii subsp. bulgaricus (strain ATCC 11842 / DSM 20081 / BCRC 10696 / JCM 1002 / NBRC 13953 / NCIMB 11778 / NCTC 12712 / WDCM 00102 / Lb 14), this protein is Ribosome maturation factor RimP.